The sequence spans 456 residues: MSTLYDVVIVGGGLTGLNAAYQFKKAGLNVMVLKPKDRFGGRTESIKVEDYWFDLGGQWMGGTHKYLKELCDELGVKSFPQYDEGKHVLEINGKKVYYQGNISNLNKSYNLEGLFESISKIDELSAELNPDKPYAHSKSKEYDQLTVAQWVEKNVKGNDARSIIDWFCRVCVAAEPTEVSFLFFLHFIRTAGNYGLLADIHGGAQQDRLIGGSQQISEGLAKKIGEKHYTLNAPVRSIIQDANQCTIKTDNGSTYRSKYIVVAIPPTLAGRIHYSPSMPPRRDELTQRMPMGSVIKTITIYDEPFWRKEGYSAEAISDKGPIFICYDDSSHDDKKTAIVGFIAASAAKDWAEKSPEERKRAVLDCYARWWGPKALSPRIFLEKSWKEEEYSRGCYLGYTSPGTLYQCGEHLRAPVGRIHWAGTETASVWIGYMEGALESGFRVSKEIKDKLLNSKL.

The residue at position 394 (Cys394) is an S-8alpha-FAD cysteine.

Belongs to the flavin monoamine oxidase family. FAD is required as a cofactor.

It catalyses the reaction a secondary aliphatic amine + O2 + H2O = a primary amine + an aldehyde + H2O2. The sequence is that of Probable flavin-containing monoamine oxidase A (maoA) from Dictyostelium discoideum (Social amoeba).